The chain runs to 244 residues: B3 domain-containing protein At2g36080 (244 aa).

Positions 38-144 form a DNA-binding region, TF-B3; the sequence is FEKPLTPSDV…RFFIGWRRRG (107 aa).

The protein localises to the nucleus. The chain is B3 domain-containing protein At2g36080 (ARF31) from Arabidopsis thaliana (Mouse-ear cress).